Consider the following 293-residue polypeptide: ATP synthase subunit a (293 aa).

The next 8 helical transmembrane spans lie at 39-59 (QVFGIFVVFIVLLTLFLVYWI), 73-93 (FVLLMQMLFVWAQDTTADLIG), 102-122 (YFLMLLLYLVSSNLIGLLGGI), 128-148 (SLTFTFSLGLATFLGIVIMGI), 172-192 (TLIPNPLSFLGEFAPLFSISL), 198-218 (ILGGTLILALFYNFWFFAFST), 224-244 (LALSLGAIFAGILTPALHVYF), and 245-265 (DVVVGTLQGYVFVMLTYNYWA).

The protein belongs to the ATPase A chain family. F-type ATPases have 2 components, CF(1) - the catalytic core - and CF(0) - the membrane proton channel. CF(1) has five subunits: alpha(3), beta(3), gamma(1), delta(1), epsilon(1). CF(0) has three main subunits: a(1), b(2) and c(9-12). The alpha and beta chains form an alternating ring which encloses part of the gamma chain. CF(1) is attached to CF(0) by a central stalk formed by the gamma and epsilon chains, while a peripheral stalk is formed by the delta and b chains.

It is found in the cell membrane. Key component of the proton channel; it plays a direct role in the translocation of protons across the membrane. This is ATP synthase subunit a from Mycoplasma pneumoniae (strain ATCC 29342 / M129 / Subtype 1) (Mycoplasmoides pneumoniae).